Here is a 390-residue protein sequence, read N- to C-terminus: Acetate kinase (390 aa).

N10 serves as a coordination point for Mg(2+). Position 17 (K17) interacts with ATP. A substrate-binding site is contributed by R89. The active-site Proton donor/acceptor is the D146. Residues 204 to 208, 278 to 280, and 323 to 327 contribute to the ATP site; these read HLGNG, DMR, and GIGEN. E376 contacts Mg(2+).

The protein belongs to the acetokinase family. In terms of assembly, homodimer. The cofactor is Mg(2+). It depends on Mn(2+) as a cofactor.

The protein resides in the cytoplasm. It catalyses the reaction acetate + ATP = acetyl phosphate + ADP. The protein operates within metabolic intermediate biosynthesis; acetyl-CoA biosynthesis; acetyl-CoA from acetate: step 1/2. Catalyzes the formation of acetyl phosphate from acetate and ATP. Can also catalyze the reverse reaction. This chain is Acetate kinase, found in Mycoplasma pneumoniae (strain ATCC 29342 / M129 / Subtype 1) (Mycoplasmoides pneumoniae).